Here is a 312-residue protein sequence, read N- to C-terminus: Ribonuclease Z (312 aa).

Zn(2+) contacts are provided by His-62, His-64, Asp-66, His-67, His-144, Asp-215, and His-273. Asp-66 functions as the Proton acceptor in the catalytic mechanism.

It belongs to the RNase Z family. Homodimer. The cofactor is Zn(2+).

It carries out the reaction Endonucleolytic cleavage of RNA, removing extra 3' nucleotides from tRNA precursor, generating 3' termini of tRNAs. A 3'-hydroxy group is left at the tRNA terminus and a 5'-phosphoryl group is left at the trailer molecule.. Zinc phosphodiesterase, which displays some tRNA 3'-processing endonuclease activity. Probably involved in tRNA maturation, by removing a 3'-trailer from precursor tRNA. This Prochlorococcus marinus (strain MIT 9301) protein is Ribonuclease Z.